Consider the following 622-residue polypeptide: Arginine--tRNA ligase (622 aa).

Residues 127 to 137 (ANPVHPLHVGH) carry the 'HIGH' region motif.

Belongs to the class-I aminoacyl-tRNA synthetase family.

It is found in the cytoplasm. It catalyses the reaction tRNA(Arg) + L-arginine + ATP = L-arginyl-tRNA(Arg) + AMP + diphosphate. In Ignicoccus hospitalis (strain KIN4/I / DSM 18386 / JCM 14125), this protein is Arginine--tRNA ligase.